A 202-amino-acid polypeptide reads, in one-letter code: MHVTQSSSAITPGQTAELYPGDIKSVLLTAEQIQARIAELGEQIGNDYRELSATTGQDLLLITVLKGAVLFVTDLARAIPVPTQFEFMAVSSYGSSTSSSGVVRILKDLDRDIHGRDVLIVEDVVDSGLTLSWLSRNLTSRNPRSLRVCTLLRKPDAVHANVEIAYVGFDIPNDFVVGYGLDYDERYRDLSYIGTLDPRVYQ.

Positions 66 and 67 each coordinate diphosphate. Residues Glu-122 and Asp-123 each coordinate Mg(2+). Residue Asp-126 is the Proton acceptor of the active site. GMP-binding positions include Lys-154, 175-176 (FV), and Asp-182. Arg-188 contacts diphosphate.

It belongs to the purine/pyrimidine phosphoribosyltransferase family. Homodimer and homotetramer in equilibrium. The presence or absence of divalent metal ions, as well as phosphate, can affect the oligomerization state of the enzyme. Likely functions as a tetramer (rather than a dimer) in its biological environment, which is the most active form. The dimeric structure is also active though ~50% of that of the tetramer. Requires Mg(2+) as cofactor.

It localises to the cytoplasm. The catalysed reaction is IMP + diphosphate = hypoxanthine + 5-phospho-alpha-D-ribose 1-diphosphate. It catalyses the reaction GMP + diphosphate = guanine + 5-phospho-alpha-D-ribose 1-diphosphate. It participates in purine metabolism; IMP biosynthesis via salvage pathway; IMP from hypoxanthine: step 1/1. The protein operates within purine metabolism; GMP biosynthesis via salvage pathway; GMP from guanine: step 1/1. With respect to regulation, competitively inhibited by acyclic nucleoside phosphonates (ANPs) with Ki values as low as 0.69 uM. Prodrugs of these compounds arrest the growth of a virulent strain of M.tuberculosis with MIC50 values as low as 4.5 uM and possess low cytotoxicity in mammalian cells. Inhibited by pyrrolidine nucleoside bisphosphonates, which are also able to arrest the growth of virulent M.tuberculosis not only in its replicating phase but also in its latent phase, and to arrest the growth of M.tuberculosis in infected macrophages while having low cytotoxicity in mammalian cells. Functionally, purine salvage pathway enzyme that catalyzes the transfer of the ribosyl-5-phosphate group from 5-phospho-alpha-D-ribose 1-diphosphate (PRPP) to the N9 position of the 6-oxopurines hypoxanthine and guanine to form the corresponding ribonucleotides IMP (inosine 5'-monophosphate) and GMP (guanosine 5'-monophosphate), with the release of PPi. Thus, specifically recycles hypoxanthine and guanine imported from the external medium, and converts them to IMP and GMP, respectively. Cannot use xanthine as substrate. The polypeptide is Hypoxanthine-guanine phosphoribosyltransferase (Mycobacterium tuberculosis (strain ATCC 25618 / H37Rv)).